An 837-amino-acid chain; its full sequence is SLIT and NTRK-like protein 4 (837 aa).

The N-terminal stretch at 1-18 (MFLWLFLIVSALISSTNA) is a signal peptide. Topologically, residues 19-618 (DSDISVEICN…SPPGGPVPLS (600 aa)) are extracellular. 6 LRR repeats span residues 60 to 81 (NFYH…TFVN), 84 to 105 (HAVS…AFLG), 108 to 129 (ALKQ…TFLG), 132 to 153 (NLEY…AFNK), 156 to 177 (KLKV…IFRF), and 179 to 200 (SLTH…GVLE). N81 is a glycosylation site (N-linked (GlcNAc...) asparagine). Residues 213–264 (NPWNCSCDLLPLKAWLENMPYNIYIGEAICETPSDLYGRLLKETNKQELCPM) form the LRRCT 1 domain. The N-linked (GlcNAc...) asparagine glycan is linked to N325. The 43-residue stretch at 333–375 (QTRVPPLTPCPVPCFCKTHPSDLGLSVNCQEKNIQSMSELTPK) folds into the LRRNT domain. LRR repeat units lie at residues 378-399 (NAKK…DFTE), 402-423 (GLDL…VFHN), 426-447 (NLRR…IFSG), 450-471 (NLQY…TFDS), 474-495 (NLQL…IFSG), and 497-518 (PLAR…GVLD). N423 carries an N-linked (GlcNAc...) asparagine glycan. One can recognise an LRRCT 2 domain in the interval 531–582 (NPWDCTCDLVALKLWLEKLNDGIVVKELKCETPVQFANIELKSLKNEILCPK). Residues 619–639 (ILILSILVVLILTVFVAFCLL) form a helical membrane-spanning segment. The Cytoplasmic portion of the chain corresponds to 640 to 837 (VFVLRRNKKP…LEEQTALNKI (198 aa)).

The protein belongs to the SLITRK family. In terms of assembly, interacts (via LRR 1 and 2 repeats) with PTPRD (via extracellular domain). In the adult, significant expression is detected only in the brain. Broadly expressed in embryonic brain with highest expression in subventricular zone, subplate, cortical plate, pyramidal cell layer of hippocampus, thalamus and hypothalamus.

The protein localises to the membrane. The protein resides in the cell membrane. In terms of biological role, it is involved in synaptogenesis and promotes synapse differentiation. Suppresses neurite outgrowth. In Mus musculus (Mouse), this protein is SLIT and NTRK-like protein 4 (Slitrk4).